The chain runs to 231 residues: MNLVSLKDIVFGYSHTPVLDKVSLDIESGEFVGITGPNGASKSTLIKVMLGMLKPWEGTVTISKRNTEGKRLTIGYVPQQISSFNAGFPSTVLELVQSGRYTKGKWFKRLNEEDHLEVEKALKMVEMWDLRHRKIGDLSGGQKQKICIARMLASNPDLLMLDEPTTAVDYDSRKGFYEFMHHLVKNHNRTVVMVTHEQNEVQQFLDKVIRLERGEKGGWKCLTWNSCDELF.

The ABC transporter domain occupies 4 to 230 (VSLKDIVFGY…CLTWNSCDEL (227 aa)).

Belongs to the ABC transporter superfamily. In terms of assembly, the complex is composed of two ATP-binding proteins (ZnuC), two transmembrane proteins (ZnuB) and a solute-binding protein (ZnuA).

The protein resides in the cell membrane. The enzyme catalyses Zn(2+)(out) + ATP(in) + H2O(in) = Zn(2+)(in) + ADP(in) + phosphate(in) + H(+)(in). Part of the high-affinity ABC transporter complex ZnuABC involved in zinc import. Responsible for energy coupling to the transport system. ZnuABC-mediated zinc transport is required for comF expression and competence development. This is High-affinity zinc uptake system ATP-binding protein ZnuC (znuC) from Bacillus subtilis (strain 168).